The chain runs to 147 residues: Ubiquitin-conjugating enzyme E2-16 kDa (147 aa).

The region spanning 1–147 is the UBC core domain; the sequence is MAFKRINKEL…AREWTRKYAI (147 aa). Cys-107 serves as the catalytic Glycyl thioester intermediate.

It belongs to the ubiquitin-conjugating enzyme family.

It carries out the reaction S-ubiquitinyl-[E1 ubiquitin-activating enzyme]-L-cysteine + [E2 ubiquitin-conjugating enzyme]-L-cysteine = [E1 ubiquitin-activating enzyme]-L-cysteine + S-ubiquitinyl-[E2 ubiquitin-conjugating enzyme]-L-cysteine.. The protein operates within protein modification; protein ubiquitination. Functionally, catalyzes the covalent attachment of ubiquitin to other proteins. May also mediate selective proteolysis pathways. This Colletotrichum gloeosporioides (Anthracnose fungus) protein is Ubiquitin-conjugating enzyme E2-16 kDa (UBC1).